Here is a 354-residue protein sequence, read N- to C-terminus: MERYLTKMPIKSKANEVPKKEAFAKKETPKVARKATKTDTPKELKDKENAGDDNTPKQTKGRPGRPAAKRKNLDTPDVKDEKIAMEEENPPKRRSSRLTRSTRSMAEDGSPSPEKEKPEKLPFIKYKGAIKYFTESQDIAASADDVLQWVEKQKDDVVPMAFDMEWPFSFQTGPGKSSVIQICVDEKCCYIYQLTNVKKLPAALVALINHPKVRLHGVNIKNDFRKLARDFPEVTAEPLIEKCVDLGLWCNEVCETGGRWSLERLTNFIAKKAMDKSKKVRMSKWHVIPLDENQLMYAAIDVYIGQVIYRELERREKVKIKNEEEFKEKNGDAAFKAMKTLGETFLTKINEVTL.

Positions 1-120 (MERYLTKMPI…PSPEKEKPEK (120 aa)) are disordered. Residues 13-50 (KANEVPKKEAFAKKETPKVARKATKTDTPKELKDKENA) are compositionally biased toward basic and acidic residues. Over residues 59–70 (TKGRPGRPAAKR) the composition is skewed to basic residues. A compositionally biased stretch (basic and acidic residues) spans 71–91 (KNLDTPDVKDEKIAMEEENPP). Phosphoserine occurs at positions 104, 110, and 112. The 3'-5' exonuclease domain maps to 149–314 (WVEKQKDDVV…GQVIYRELER (166 aa)). Mg(2+) is bound by residues Asp-163, Glu-165, and Asp-301.

The protein belongs to the WRNexo family.

The protein resides in the nucleus. Has exonuclease activity on both single-stranded and duplex templates bearing overhangs, but not blunt ended duplex DNA, and cleaves in a 3'-5' direction. Essential for the formation of DNA replication focal centers. Has an important role in maintaining genome stability. The protein is 3'-5' exonuclease of Drosophila sechellia (Fruit fly).